The chain runs to 102 residues: Small ribosomal subunit protein uS10 (102 aa).

It belongs to the universal ribosomal protein uS10 family. Part of the 30S ribosomal subunit.

Functionally, involved in the binding of tRNA to the ribosomes. This is Small ribosomal subunit protein uS10 from Oenococcus oeni (strain ATCC BAA-331 / PSU-1).